The following is a 599-amino-acid chain: Adenine deaminase (599 aa).

Belongs to the metallo-dependent hydrolases superfamily. Adenine deaminase family. It depends on Mn(2+) as a cofactor.

It carries out the reaction adenine + H2O + H(+) = hypoxanthine + NH4(+). In Clostridium botulinum (strain 657 / Type Ba4), this protein is Adenine deaminase.